A 204-amino-acid polypeptide reads, in one-letter code: NAD(P)H dehydrogenase (quinone) (204 aa).

A Flavodoxin-like domain is found at valine 3–valine 194. Residues serine 9–isoleucine 14 and threonine 82–phenylalanine 84 contribute to the FMN site. Tyrosine 11 contributes to the NAD(+) binding site. Tryptophan 102 contributes to the substrate binding site. FMN is bound at residue histidine 138.

Belongs to the WrbA family. The cofactor is FMN.

It catalyses the reaction a quinone + NADH + H(+) = a quinol + NAD(+). The enzyme catalyses a quinone + NADPH + H(+) = a quinol + NADP(+). The protein is NAD(P)H dehydrogenase (quinone) of Syntrophobacter fumaroxidans (strain DSM 10017 / MPOB).